A 147-amino-acid chain; its full sequence is MLAQTFKKPHRAVLEQVSGTTVFIRNKRTKSKSSLSPLAQRVVTQLSVMSASRKQPKLLKLAREDLIKHQTIEKCWSIYQQQQRERRNLQLELQYKSIERSMNLLQELSPRLFEAANASEKGKRFPMEMKVPTDFPPNTLWHYNFRK.

Residues 1-26 (MLAQTFKKPHRAVLEQVSGTTVFIRN) constitute a mitochondrion transit peptide.

The protein belongs to the mitochondrion-specific ribosomal protein mL40 family. As to quaternary structure, component of the mitochondrial large ribosomal subunit (mt-LSU). Mature yeast 74S mitochondrial ribosomes consist of a small (37S) and a large (54S) subunit. The 37S small subunit contains a 15S ribosomal RNA (15S mt-rRNA) and 34 different proteins. The 54S large subunit contains a 21S rRNA (21S mt-rRNA) and 46 different proteins.

The protein localises to the mitochondrion. Functionally, component of the mitochondrial ribosome (mitoribosome), a dedicated translation machinery responsible for the synthesis of mitochondrial genome-encoded proteins, including at least some of the essential transmembrane subunits of the mitochondrial respiratory chain. The mitoribosomes are attached to the mitochondrial inner membrane and translation products are cotranslationally integrated into the membrane. In Saccharomyces cerevisiae (strain ATCC 204508 / S288c) (Baker's yeast), this protein is Large ribosomal subunit protein mL40 (MRPL28).